The primary structure comprises 347 residues: Toluene-4-sulfonate monooxygenase system iron-sulfur subunit TsaM1 (347 aa).

In terms of domain architecture, Rieske spans 7-109; it reads WYVAAWDTEI…VVERNRLVWI (103 aa). [2Fe-2S] cluster contacts are provided by C48, H50, C67, and H70.

As to quaternary structure, homotetramer. Part of the p-toluenesulfonate methyl-monooxygenase complex TsaBM, comprising the reductase TsaB and the oxygenase TsaM. [2Fe-2S] cluster is required as a cofactor.

It carries out the reaction toluene-4-sulfonate + NADH + O2 + H(+) = 4-(hydroxymethyl)benzenesulfonate + NAD(+) + H2O. Its function is as follows. Involved in the toluene-4-sulfonate degradation pathway. Does not discriminate between the sulfonate and the carboxyl substituents and can also be involved in the p-toluenecarboxylate degradation pathway. Can use toluene-4-sulfonate, p-toluate, m-toluate and 4-ethylbenzoate as substrates, but not p-xylene, toluene and p-cresol. Also catalyzes the demethylation of 4-methoxybenzoate to 4-hydroxybenzoate. This Comamonas testosteroni (Pseudomonas testosteroni) protein is Toluene-4-sulfonate monooxygenase system iron-sulfur subunit TsaM1 (tsaM1).